The chain runs to 548 residues: Methyl-accepting chemotaxis protein HlyB (548 aa).

Residues 1–10 are Cytoplasmic-facing; that stretch reads MIINKFSLKW. Residues 11-31 traverse the membrane as a helical segment; it reads MLAIAVAIPAIALLFVAFTSL. The Periplasmic segment spans residues 32–199; it reads NTMSVMQAQS…SFEAGRTKQM (168 aa). The chain crosses the membrane as a helical span at residues 200–220; sequence VIIAAGLIISFITSLVIITNL. Residues 218–271 form the HAMP domain; sequence TNLRSRVAYLKDRMSSAAANLSLRTRLELDGNDELCDIGKSFNAFIDKVHHSIE. Topologically, residues 221 to 548 are cytoplasmic; sequence RSRVAYLKDR…LDKLVGSFEL (328 aa). One can recognise a Methyl-accepting transducer domain in the interval 276–512; that stretch reads NSKELATMAS…DINRNVEDIN (237 aa).

It belongs to the methyl-accepting chemotaxis (MCP) protein family.

The protein resides in the cell inner membrane. Functionally, chemotactic-signal transducers respond to changes in the concentration of attractants and repellents in the environment, transduce a signal from the outside to the inside of the cell, and facilitate sensory adaptation through the variation of the level of methylation. This Vibrio cholerae serotype O1 (strain ATCC 39315 / El Tor Inaba N16961) protein is Methyl-accepting chemotaxis protein HlyB (hlyB).